The primary structure comprises 620 residues: 1-deoxy-D-xylulose-5-phosphate synthase (620 aa).

Thiamine diphosphate-binding positions include H80 and 121-123 (GHS). D152 is a Mg(2+) binding site. Residues 153–154 (GA), N181, Y288, and E370 contribute to the thiamine diphosphate site. Residue N181 participates in Mg(2+) binding.

Belongs to the transketolase family. DXPS subfamily. Homodimer. Mg(2+) is required as a cofactor. Thiamine diphosphate serves as cofactor.

The enzyme catalyses D-glyceraldehyde 3-phosphate + pyruvate + H(+) = 1-deoxy-D-xylulose 5-phosphate + CO2. It functions in the pathway metabolic intermediate biosynthesis; 1-deoxy-D-xylulose 5-phosphate biosynthesis; 1-deoxy-D-xylulose 5-phosphate from D-glyceraldehyde 3-phosphate and pyruvate: step 1/1. Functionally, catalyzes the acyloin condensation reaction between C atoms 2 and 3 of pyruvate and glyceraldehyde 3-phosphate to yield 1-deoxy-D-xylulose-5-phosphate (DXP). This is 1-deoxy-D-xylulose-5-phosphate synthase from Escherichia coli (strain 55989 / EAEC).